A 1167-amino-acid polypeptide reads, in one-letter code: Chromosome partition protein Smc (1167 aa).

32-39 (PNGCGKSN) contacts ATP. Coiled-coil stretches lie at residues 170–274 (ISKY…RIET), 310–390 (QREL…HNRD), 468–500 (GLQE…LETL), 653–870 (ALLR…ERAL), and 982–1011 (EYLD…ETRG).

It belongs to the SMC family. As to quaternary structure, homodimer.

It is found in the cytoplasm. Its function is as follows. Required for chromosome condensation and partitioning. In Xanthomonas oryzae pv. oryzae (strain KACC10331 / KXO85), this protein is Chromosome partition protein Smc.